A 184-amino-acid polypeptide reads, in one-letter code: Holliday junction branch migration complex subunit RuvA (184 aa).

Positions 1–64 are domain I; it reads MIVAVEGIIT…EDADLLYGFL (64 aa). Positions 65-145 are domain II; it reads DEKEKRMFEM…ANDGEQYKIE (81 aa). A region of interest (flexible linker) is located at residue Glu145. Residues 145–184 form a domain III region; it reads ETISALENLGFKRDKINKILLNCKSTNTADLIKEALKKLA.

Belongs to the RuvA family. In terms of assembly, homotetramer. Forms an RuvA(8)-RuvB(12)-Holliday junction (HJ) complex. HJ DNA is sandwiched between 2 RuvA tetramers; dsDNA enters through RuvA and exits via RuvB. An RuvB hexamer assembles on each DNA strand where it exits the tetramer. Each RuvB hexamer is contacted by two RuvA subunits (via domain III) on 2 adjacent RuvB subunits; this complex drives branch migration. In the full resolvosome a probable DNA-RuvA(4)-RuvB(12)-RuvC(2) complex forms which resolves the HJ.

Its subcellular location is the cytoplasm. In terms of biological role, the RuvA-RuvB-RuvC complex processes Holliday junction (HJ) DNA during genetic recombination and DNA repair, while the RuvA-RuvB complex plays an important role in the rescue of blocked DNA replication forks via replication fork reversal (RFR). RuvA specifically binds to HJ cruciform DNA, conferring on it an open structure. The RuvB hexamer acts as an ATP-dependent pump, pulling dsDNA into and through the RuvAB complex. HJ branch migration allows RuvC to scan DNA until it finds its consensus sequence, where it cleaves and resolves the cruciform DNA. This Campylobacter hominis (strain ATCC BAA-381 / DSM 21671 / CCUG 45161 / LMG 19568 / NCTC 13146 / CH001A) protein is Holliday junction branch migration complex subunit RuvA.